A 1142-amino-acid chain; its full sequence is ABC transporter F family member 4 (1142 aa).

The segment at 1 to 564 (MGPKGKKKGQ…EDAFELAKKK (564 aa)) is disordered. 3 stretches are compositionally biased toward low complexity: residues 121–143 (PQPV…QQQQ), 153–166 (PQPV…APQK), and 182–195 (PQPV…APQK). Composition is skewed to acidic residues over residues 203–212 (SEDEDEEDEV) and 233–244 (EEEEEEEEEEIE). 2 stretches are compositionally biased toward basic residues: residues 249 to 261 (KGGK…KGGK) and 280 to 290 (KGGKKDKKKGS). Residues 295 to 306 (EEEEEEEEEEIE) show a composition bias toward acidic residues. Residues 314–328 (NKKDQKKGGKGKHVE) are compositionally biased toward basic and acidic residues. The segment covering 329 to 340 (EEEEEEEEEEIE) has biased composition (acidic residues). Residues 377-387 (KGGKKDKKKGS) show a composition bias toward basic residues. Acidic residues-rich tracts occupy residues 392 to 404 (EEEE…EEIE) and 441 to 451 (EEEEQEQEEEE). Residues 456-467 (SKSNKKDKKKGK) show a composition bias toward basic residues. Residues 471–480 (EEEEEEEEEE) show a composition bias toward acidic residues. Positions 485 to 496 (SKSNKKDKKKGS) are enriched in basic residues. Positions 501-518 (EEEEEEEEEEEEEKEEEE) are enriched in acidic residues. Positions 530-548 (AKKVKKVDKKEKKKEKEKK) are enriched in basic residues. ABC transporter domains are found at residues 604–857 (IKFD…RSKE) and 923–1139 (LVFK…DNMV). ATP is bound by residues 636-643 (GRNGIGKS) and 956-963 (GMNGVGKS).

The protein belongs to the ABC transporter superfamily.

The protein is ABC transporter F family member 4 (abcF4) of Dictyostelium discoideum (Social amoeba).